The primary structure comprises 355 residues: Cobalt-precorrin-5B C(1)-methyltransferase (355 aa).

It belongs to the CbiD family.

It catalyses the reaction Co-precorrin-5B + S-adenosyl-L-methionine = Co-precorrin-6A + S-adenosyl-L-homocysteine. It functions in the pathway cofactor biosynthesis; adenosylcobalamin biosynthesis; cob(II)yrinate a,c-diamide from sirohydrochlorin (anaerobic route): step 6/10. Functionally, catalyzes the methylation of C-1 in cobalt-precorrin-5B to form cobalt-precorrin-6A. This Sulfolobus acidocaldarius (strain ATCC 33909 / DSM 639 / JCM 8929 / NBRC 15157 / NCIMB 11770) protein is Cobalt-precorrin-5B C(1)-methyltransferase.